Reading from the N-terminus, the 412-residue chain is Peptidyl-prolyl cis-trans isomerase FKBP8 (412 aa).

The disordered stretch occupies residues 1-68 (MASCAEPSEP…GQPPAEEAEQ (68 aa)). Positions 22-50 (EDFEVLDGVEDAEGEEEEEEEEEEEDDLS) are enriched in acidic residues. The PPIase FKBP-type domain maps to 120–204 (GQVVTVHLQT…CLEVTLKTAV (85 aa)). Ca(2+) is bound by residues Asp149 and Asp151. Residues 221–254 (ANRKRECGNAHYQRADFVLAANSYDLAIKAITSS) form a TPR 1 repeat. Residues Lys249, Lys271, Lys273, and Lys284 each participate in a glycyl lysine isopeptide (Lys-Gly) (interchain with G-Cter in ubiquitin) cross-link. TPR repeat units lie at residues 272 to 305 (VKCL…QPDN) and 306 to 339 (IKAL…EPSN). Ser296 is subject to Phosphoserine. Glycyl lysine isopeptide (Lys-Gly) (interchain with G-Cter in ubiquitin) cross-links involve residues Lys307, Lys314, Lys334, Lys340, Lys348, Lys351, and Lys352. A helical transmembrane segment spans residues 390–410 (WLFGATAVALGGVALSVVIAA).

In terms of assembly, homomultimers or heteromultimers (Potential). Forms heterodimer with calmodulin. When activated by calmodulin and calcium, interacts with the BH4 domain of BCL2 and weakly with BCL2L1/BCLX isoform Bcl-X(L). Does not bind and inhibit calcineurin. Interacts with ZFYVE27; may negatively regulate ZFYVE27 phosphorylation. (Microbial infection) Interacts with hepatitis C/HCV protein NS5A. Ca(2+) serves as cofactor. Ubiquitinated by PRKN during mitophagy, leading to its degradation and enhancement of mitophagy. Deubiquitinated by USP30. In terms of tissue distribution, widely expressed. Highest levels seen in the brain. Highly abundant in the retina.

It is found in the mitochondrion. The protein localises to the mitochondrion membrane. The catalysed reaction is [protein]-peptidylproline (omega=180) = [protein]-peptidylproline (omega=0). In terms of biological role, constitutively inactive PPiase, which becomes active when bound to calmodulin and calcium. Seems to act as a chaperone for BCL2, targets it to the mitochondria and modulates its phosphorylation state. The BCL2/FKBP8/calmodulin/calcium complex probably interferes with the binding of BCL2 to its targets. The active form of FKBP8 may therefore play a role in the regulation of apoptosis. Involved in the inhibition of viral infection by influenza A viruses (IAV). This Homo sapiens (Human) protein is Peptidyl-prolyl cis-trans isomerase FKBP8 (FKBP8).